Consider the following 91-residue polypeptide: uncharacterized protein (91 aa).

It localises to the plastid. It is found in the cyanelle. This is an uncharacterized protein from Cyanophora paradoxa.